We begin with the raw amino-acid sequence, 877 residues long: Ewing's tumor-associated antigen 1 homolog (877 aa).

The tract at residues 1-82 is disordered; that stretch reads MQLKDGGTGM…GRSPRGKETP (82 aa). Residues 56-65 show a composition bias toward basic residues; it reads AGTRSARRAQ. Residue K87 forms a Glycyl lysine isopeptide (Lys-Gly) (interchain with G-Cter in SUMO2) linkage. An ATR-activation domain (AAD) motif is present at residues 107–113; that stretch reads IFWDQNS. 2 coiled-coil regions span residues 185–213 and 306–335; these read KTKNREKELMKLAQQFDKNMEELDVIQEQ and AFLNNSKTSLRKKNALLQEEIITTETLLTE. Residues K416 and K444 each participate in a glycyl lysine isopeptide (Lys-Gly) (interchain with G-Cter in SUMO2) cross-link. The disordered stretch occupies residues 450 to 479; sequence PSKTRNGELRNAGEHRFSSHPGDESRKVPF. Over residues 454-476 the composition is skewed to basic and acidic residues; that stretch reads RNGELRNAGEHRFSSHPGDESRK. S467 carries the phosphoserine modification. A Glycyl lysine isopeptide (Lys-Gly) (interchain with G-Cter in SUMO2) cross-link involves residue K510. The short motif at 607–622 is the RBM1 motif element; the sequence is GEVDDDLFCQACDDIE. 2 disordered regions span residues 626 to 664 and 818 to 877; these read QQENKGSEESESVSYTSTRGSRSSSTASKQASQSAPSKH and ANQQ…ISLP. The segment covering 637–662 has biased composition (low complexity); that stretch reads SVSYTSTRGSRSSSTASKQASQSAPS. Over residues 818–833 the composition is skewed to polar residues; sequence ANQQQSSINYSESLKP. The segment covering 840 to 859 has biased composition (basic and acidic residues); the sequence is ERNRKYSPEEIQRKRQEALV. Residues 843 to 865 carry the RBM2 motif motif; sequence RKYSPEEIQRKRQEALVRRKAKA. Residues 868 to 877 show a composition bias toward polar residues; it reads TVQSAPISLP.

In terms of assembly, interacts (via RBM1 motif) with RPA1. Interacts (via RBM2 motif) with RPA2. Interacts (via the ATR-activation domain motif) with ATR. In terms of processing, phosphorylated by ATR.

The protein resides in the nucleus. In terms of biological role, replication stress response protein that accumulates at DNA damage sites and promotes replication fork progression and integrity. Recruited to stalled replication forks via interaction with the RPA complex and directly stimulates ATR kinase activity independently of TOPBP1. Probably only regulates a subset of ATR targets. The protein is Ewing's tumor-associated antigen 1 homolog of Mus musculus (Mouse).